The following is a 445-amino-acid chain: Argininosuccinate synthase (445 aa).

Residues 17 to 25 (AFSGGLDTS) and alanine 43 each bind ATP. Tyrosine 99 contacts L-citrulline. ATP-binding residues include glycine 129 and threonine 131. L-aspartate contacts are provided by threonine 131, asparagine 135, and aspartate 136. L-citrulline is bound at residue asparagine 135. Aspartate 136 is an ATP binding site. Arginine 139 and serine 192 together coordinate L-citrulline. Residue aspartate 194 participates in ATP binding. 3 residues coordinate L-citrulline: threonine 201, glutamate 203, and glutamate 280.

This sequence belongs to the argininosuccinate synthase family. Type 2 subfamily. Homotetramer.

The protein resides in the cytoplasm. It carries out the reaction L-citrulline + L-aspartate + ATP = 2-(N(omega)-L-arginino)succinate + AMP + diphosphate + H(+). Its pathway is amino-acid biosynthesis; L-arginine biosynthesis; L-arginine from L-ornithine and carbamoyl phosphate: step 2/3. This chain is Argininosuccinate synthase (argG), found in Ralstonia nicotianae (strain ATCC BAA-1114 / GMI1000) (Ralstonia solanacearum).